We begin with the raw amino-acid sequence, 301 residues long: Peroxisome assembly protein 26 (301 aa).

Residues 1 to 246 (MKNDSSTSAA…DAAASHLLSQ (246 aa)) lie on the Cytoplasmic side of the membrane. The helical; Signal-anchor for type II membrane protein transmembrane segment at 247 to 263 (PFKKSLLAALILCLLVL) threads the bilayer. Residues 264–301 (RFDPATPSSLPFLYQLAHLFRRIQKATLSRLYPLALRD) are Peroxisomal-facing.

This sequence belongs to the peroxin-26 family. As to quaternary structure, interacts directly with PEX6 via its cytoplasmic domain. Interacts indirectly with PEX1, via its interaction with PEX6.

The protein localises to the peroxisome membrane. Functionally, peroxisomal docking factor that anchors PEX1 and PEX6 to peroxisome membranes. It is therefore required for the formation of the PEX1-PEX6 AAA ATPase complex, a complex that mediates the extraction of the PEX5 receptor from peroxisomal membrane. The sequence is that of Peroxisome assembly protein 26 (Pex26) from Cricetulus griseus (Chinese hamster).